The sequence spans 285 residues: MSGNLDVLSLKEDDVTKMLAATTHIGSTSVNFQMEQYVYKRRTDGVHIINLGRTYEKLLLAARCIASIEYPGEVFAISSRPYGQRAVLKYAHYTQATPIAGRFTPGAFTNQIQTTFREPRLLIVTDPLTDHQPVTEASYVNIPVIAFCNTDSPVKFVDIAIPCNTKSTHSIGLMWWMLAREVLRLRGKITHDRWEVMPDLFFFRDPEEAEKEQAAIEAAAPVIKDVPDEVVVADEPTTWGEDVTQTAMAVPQAKPLAVAGANDDWNEDDTAPAAPGAASWGGAAF.

The segment at 262–285 is disordered; it reads NDDWNEDDTAPAAPGAASWGGAAF. A compositionally biased stretch (low complexity) spans 271–285; the sequence is APAAPGAASWGGAAF.

This sequence belongs to the universal ribosomal protein uS2 family. In terms of assembly, component of the small ribosomal subunit. Mature ribosomes consist of a small (40S) and a large (60S) subunit. The 40S subunit contains about 33 different proteins and 1 molecule of RNA (18S). The 60S subunit contains about 49 different proteins and 3 molecules of RNA (28S, 5.8S and 5S). Interacts with ribosomal protein S21.

It is found in the cytoplasm. Required for the assembly and/or stability of the 40S ribosomal subunit. Required for the processing of the 20S rRNA-precursor to mature 18S rRNA in a late step of the maturation of 40S ribosomal subunits. The protein is Small ribosomal subunit protein uS2 of Anopheles gambiae (African malaria mosquito).